Reading from the N-terminus, the 416-residue chain is CinA-like protein (416 aa).

This sequence belongs to the CinA family.

The protein is CinA-like protein of Synechocystis sp. (strain ATCC 27184 / PCC 6803 / Kazusa).